The following is a 279-amino-acid chain: Urease accessory protein UreD (279 aa).

Belongs to the UreD family. In terms of assembly, ureD, UreF and UreG form a complex that acts as a GTP-hydrolysis-dependent molecular chaperone, activating the urease apoprotein by helping to assemble the nickel containing metallocenter of UreC. The UreE protein probably delivers the nickel.

It is found in the cytoplasm. Its function is as follows. Required for maturation of urease via the functional incorporation of the urease nickel metallocenter. This Paracoccus denitrificans (strain Pd 1222) protein is Urease accessory protein UreD.